Reading from the N-terminus, the 272-residue chain is NH(3)-dependent NAD(+) synthetase (272 aa).

ATP is bound at residue 45–52 (GISGGQDS). Asp-51 is a binding site for Mg(2+). Arg-138 serves as a coordination point for deamido-NAD(+). Thr-158 is a binding site for ATP. Glu-163 is a binding site for Mg(2+). Positions 171 and 178 each coordinate deamido-NAD(+). Positions 187 and 209 each coordinate ATP. 258–259 (HK) is a binding site for deamido-NAD(+).

Belongs to the NAD synthetase family. Homodimer.

It carries out the reaction deamido-NAD(+) + NH4(+) + ATP = AMP + diphosphate + NAD(+) + H(+). It participates in cofactor biosynthesis; NAD(+) biosynthesis; NAD(+) from deamido-NAD(+) (ammonia route): step 1/1. Its function is as follows. Catalyzes the ATP-dependent amidation of deamido-NAD to form NAD. Uses ammonia as a nitrogen source. This is NH(3)-dependent NAD(+) synthetase from Bacillus cereus (strain ATCC 10987 / NRS 248).